A 95-amino-acid chain; its full sequence is Aspartyl/glutamyl-tRNA(Asn/Gln) amidotransferase subunit C (95 aa).

The protein belongs to the GatC family. In terms of assembly, heterotrimer of A, B and C subunits.

It catalyses the reaction L-glutamyl-tRNA(Gln) + L-glutamine + ATP + H2O = L-glutaminyl-tRNA(Gln) + L-glutamate + ADP + phosphate + H(+). It carries out the reaction L-aspartyl-tRNA(Asn) + L-glutamine + ATP + H2O = L-asparaginyl-tRNA(Asn) + L-glutamate + ADP + phosphate + 2 H(+). Functionally, allows the formation of correctly charged Asn-tRNA(Asn) or Gln-tRNA(Gln) through the transamidation of misacylated Asp-tRNA(Asn) or Glu-tRNA(Gln) in organisms which lack either or both of asparaginyl-tRNA or glutaminyl-tRNA synthetases. The reaction takes place in the presence of glutamine and ATP through an activated phospho-Asp-tRNA(Asn) or phospho-Glu-tRNA(Gln). This chain is Aspartyl/glutamyl-tRNA(Asn/Gln) amidotransferase subunit C, found in Geotalea uraniireducens (strain Rf4) (Geobacter uraniireducens).